We begin with the raw amino-acid sequence, 530 residues long: Glutamate--tRNA ligase (530 aa).

Residues 26 to 36 (PSPTGKAHIGT) carry the 'HIGH' region motif. The 'KMSKS' region signature appears at 267–271 (KLSKR). Lysine 270 lines the ATP pocket.

It belongs to the class-I aminoacyl-tRNA synthetase family. Glutamate--tRNA ligase type 1 subfamily. As to quaternary structure, monomer.

The protein resides in the cytoplasm. It catalyses the reaction tRNA(Glu) + L-glutamate + ATP = L-glutamyl-tRNA(Glu) + AMP + diphosphate. Catalyzes the attachment of glutamate to tRNA(Glu) in a two-step reaction: glutamate is first activated by ATP to form Glu-AMP and then transferred to the acceptor end of tRNA(Glu). This Gloeobacter violaceus (strain ATCC 29082 / PCC 7421) protein is Glutamate--tRNA ligase.